The chain runs to 358 residues: Purine permease 2 (358 aa).

10 helical membrane passes run 6–26 (VLVI…PLMM), 37–57 (IWFP…PLLL), 74–94 (FFLM…LVGF), 110–130 (TASL…FFMV), 134–154 (FTPF…VLAL), 170–190 (VVGF…LPLV), 209–229 (FQMV…LAAG), 262–282 (VIVF…GLIF), 288–308 (VSGI…VICF), and 312–332 (FQAG…SYFY). Positions 46–154 (VGCPLIFFPL…LTGGAVVLAL (109 aa)) constitute an EamA domain.

The protein belongs to the purine permeases (TC 2.A.7.14) family. In terms of tissue distribution, expressed in the vascular system of leaves. Restricted to the phloem. Expressed in flowers and roots and not detected in stems.

The protein resides in the membrane. Its activity is regulated as follows. Competitive inhibition of adenine transport by isopentenyladenine, kinetin, benzylaminopurine, trans- and cis-zeatin and trans-zeatin riboside. In terms of biological role, mediates adenine transport. May be involved in the uptake of cytokinin analogs. The chain is Purine permease 2 (PUP2) from Arabidopsis thaliana (Mouse-ear cress).